A 155-amino-acid chain; its full sequence is Small ribosomal subunit protein uS7c (155 aa).

Belongs to the universal ribosomal protein uS7 family. As to quaternary structure, part of the 30S ribosomal subunit.

It localises to the plastid. Its subcellular location is the chloroplast. One of the primary rRNA binding proteins, it binds directly to 16S rRNA where it nucleates assembly of the head domain of the 30S subunit. The protein is Small ribosomal subunit protein uS7c (rps7) of Pinus koraiensis (Korean pine).